The chain runs to 951 residues: Thyroid hormone receptor-associated protein 3 (951 aa).

A compositionally biased stretch (low complexity) spans 1–13 (MSKTNKSKSGSRS). The tract at residues 1-94 (MSKTNKSKSG…YFRGRNRGFY (94 aa)) is disordered. Ser-2 is subject to N-acetylserine. The segment at 2–190 (SKTNKSKSGS…KSSSKDSRPS (189 aa)) is required for mRNA splicing activation. Residues 14-51 (SRSRSASRSRSRSFSKSRSRSRSVSRSRKRRLSSRSRS) show a composition bias toward basic residues. Arg-17 bears the Dimethylated arginine mark. Over residues 58–75 (HNRERNHPRVYQNRDFRG) the composition is skewed to basic and acidic residues. Arg-66 is subject to Asymmetric dimethylarginine. Over residues 82–94 (RPYYFRGRNRGFY) the composition is skewed to low complexity. 2 positions are modified to asymmetric dimethylarginine: Arg-101 and Arg-108. The tract at residues 117-558 (AYSPRRGRSR…GDFSSGKSSF (442 aa)) is disordered. Residues 121 to 143 (RRGRSRSRSPKRRSPSPRSRSHS) show a composition bias toward basic residues. Over residues 144-155 (RNSDKSSSDRSR) the composition is skewed to basic and acidic residues. The span at 157–166 (SSSSRSSSNH) shows a compositional bias: low complexity. A compositionally biased stretch (basic and acidic residues) spans 167-188 (SRVESSKRKSTKEKKSSSKDSR). Lys-202 is covalently cross-linked (Glycyl lysine isopeptide (Lys-Gly) (interchain with G-Cter in SUMO1); alternate). Lys-202 participates in a covalent cross-link: Glycyl lysine isopeptide (Lys-Gly) (interchain with G-Cter in SUMO2); alternate. The span at 204 to 220 (QTFSGGTSQDIKGSESS) shows a compositional bias: polar residues. Lys-215 is covalently cross-linked (Glycyl lysine isopeptide (Lys-Gly) (interchain with G-Cter in SUMO2)). Position 220 is a phosphoserine (Ser-220). A Glycyl lysine isopeptide (Lys-Gly) (interchain with G-Cter in SUMO2); alternate cross-link involves residue Lys-221. Lys-221 carries the post-translational modification N6-acetyllysine; alternate. Phosphoserine is present on residues Ser-233, Ser-238, Ser-240, Ser-243, and Ser-248. A Glycyl lysine isopeptide (Lys-Gly) (interchain with G-Cter in SUMO2); alternate cross-link involves residue Lys-252. N6-methyllysine; alternate is present on Lys-252. Phosphoserine is present on residues Ser-253 and Ser-257. The segment covering 266 to 276 (RPSPVPKPSPP) has biased composition (pro residues). Residues 305–322 (GSGSLSPSKKSPVGKSPP) are compositionally biased toward low complexity. Residues Ser-315 and Ser-320 each carry the phosphoserine modification. Thr-324 is subject to Phosphothreonine. Position 326 is a phosphoserine (Ser-326). The residue at position 328 (Tyr-328) is a Phosphotyrosine. A Glycyl lysine isopeptide (Lys-Gly) (interchain with G-Cter in SUMO2) cross-link involves residue Lys-333. The segment covering 337 to 346 (AASGGAAYSK) has biased composition (low complexity). Phosphoserine is present on Ser-339. Residue Lys-346 forms a Glycyl lysine isopeptide (Lys-Gly) (interchain with G-Cter in SUMO2); alternate linkage. Lys-346 carries the N6-acetyllysine; alternate modification. Residues 347 to 387 (RYLEEQKTENGKDKEQKQTNADKEKLKEKGGFSDADVKMKS) show a composition bias toward basic and acidic residues. Residues Lys-353 and Lys-375 each participate in a glycyl lysine isopeptide (Lys-Gly) (interchain with G-Cter in SUMO2) cross-link. Residues 359 to 951 (DKEQKQTNAD…EKDSLQPSAE (593 aa)) are required for mRNA decay activity. The residue at position 379 (Ser-379) is a Phosphoserine. Lys-384 participates in a covalent cross-link: Glycyl lysine isopeptide (Lys-Gly) (interchain with G-Cter in SUMO1); alternate. Residue Lys-384 forms a Glycyl lysine isopeptide (Lys-Gly) (interchain with G-Cter in SUMO2); alternate linkage. Glycyl lysine isopeptide (Lys-Gly) (interchain with G-Cter in SUMO2) cross-links involve residues Lys-386 and Lys-393. Thr-394 is modified (phosphothreonine). Residue Lys-398 forms a Glycyl lysine isopeptide (Lys-Gly) (interchain with G-Cter in SUMO2) linkage. 2 positions are modified to phosphoserine: Ser-403 and Ser-405. Residues 411–449 (LRDDFEKKMADFHKEELDEHDKDKSKGRKEPEFDDEPKF) are compositionally biased toward basic and acidic residues. Residues Lys-418 and Lys-424 each participate in a glycyl lysine isopeptide (Lys-Gly) (interchain with G-Cter in SUMO2) cross-link. Lys-448 is covalently cross-linked (Glycyl lysine isopeptide (Lys-Gly) (interchain with G-Cter in SUMO1); alternate). Glycyl lysine isopeptide (Lys-Gly) (interchain with G-Cter in SUMO2); alternate cross-links involve residues Lys-448 and Lys-452. An N6-acetyllysine; alternate modification is found at Lys-452. Residues Lys-459 and Lys-465 each participate in a glycyl lysine isopeptide (Lys-Gly) (interchain with G-Cter in SUMO2) cross-link. Basic and acidic residues-rich tracts occupy residues 460–483 (NQEE…RKAE) and 490–518 (FTER…EKNF). Ser-466 carries the phosphoserine modification. Glycyl lysine isopeptide (Lys-Gly) (interchain with G-Cter in SUMO2); alternate cross-links involve residues Lys-468 and Lys-476. Residues Lys-468 and Lys-476 each carry the N6-acetyllysine; alternate modification. Lys-481 participates in a covalent cross-link: Glycyl lysine isopeptide (Lys-Gly) (interchain with G-Cter in SUMO2). An N6-acetyllysine modification is found at Lys-516. Residue Lys-524 forms a Glycyl lysine isopeptide (Lys-Gly) (interchain with G-Cter in SUMO2); alternate linkage. Lys-524 bears the N6-acetyllysine; alternate mark. The residue at position 532 (Ser-532) is a Phosphoserine. Residues 537 to 547 (KTSESRDKLGS) are compositionally biased toward basic and acidic residues. Residue Lys-548 forms a Glycyl lysine isopeptide (Lys-Gly) (interchain with G-Cter in SUMO2) linkage. Residues 548 to 558 (KGDFSSGKSSF) show a composition bias toward low complexity. Residue 549-556 (GDFSSGKS) participates in ATP binding. Residue Lys-555 forms a Glycyl lysine isopeptide (Lys-Gly) (interchain with G-Cter in SUMO2); alternate linkage. N6-acetyllysine; alternate is present on Lys-555. 3 positions are modified to phosphoserine: Ser-557, Ser-559, and Ser-572. Residue Lys-599 forms a Glycyl lysine isopeptide (Lys-Gly) (interchain with G-Cter in SUMO2) linkage. Ser-616, Ser-619, Ser-669, Ser-679, and Ser-681 each carry phosphoserine. A compositionally biased stretch (basic and acidic residues) spans 660–677 (EQEAAKNKKSPEIHRRID). The tract at residues 660 to 951 (EQEAAKNKKS…EKDSLQPSAE (292 aa)) is disordered. Over residues 688-758 (LTHEELKSPR…RSTEKTEKTH (71 aa)) the composition is skewed to basic and acidic residues. Residue Lys-694 forms a Glycyl lysine isopeptide (Lys-Gly) (interchain with G-Cter in SUMO2) linkage. Ser-695 is modified (phosphoserine). Residues Lys-702, Lys-706, Lys-708, Lys-753, and Lys-756 each participate in a glycyl lysine isopeptide (Lys-Gly) (interchain with G-Cter in SUMO2) cross-link. Residues 759 to 772 (KGSKKQKKHRRARD) show a composition bias toward basic residues. Residues 776–786 (SSSSSSQSSHS) are compositionally biased toward low complexity. Residue Lys-808 is modified to N6-acetyllysine. Arg-841 carries the post-translational modification Asymmetric dimethylarginine. The span at 844–854 (YSGNNNNNSNN) shows a compositional bias: low complexity. A Phosphoserine modification is found at Ser-860. Thr-870 is subject to Phosphothreonine. Glycyl lysine isopeptide (Lys-Gly) (interchain with G-Cter in SUMO2) cross-links involve residues Lys-872 and Lys-875. Basic and acidic residues predominate over residues 877 to 891 (YLHDDREGEGSDKWM). 2 positions are modified to phosphoserine: Ser-924 and Ser-935. The segment covering 926–936 (EEGEIEDDESG) has biased composition (acidic residues).

This sequence belongs to the BCLAF1/THRAP3 family. In terms of assembly, associated with the large multiprotein complex TRAP (Mediator complex-like). Interacts with SFPQ; the interaction is dependent on SFPQ phosphorylation at 'Thr-687' and inhibits binding of SFPQ to an ESS1 exonic splicing silencer element-containing RNA. Interacts with NXF1. Component of the SNARP complex which consists at least of SNIP1, SNW1, THRAP3, BCLAF1 and PNN. Associated with spliced mRNP complexes. Interacts with HELZ2 and PPARG. Interacts with CLOCK and BMAL1. Component of a MACOM-like complex, named WTAP complex, composed of WTAP, ZC3H13, CBLL1, KIAA1429, RBM15, BCLAF1 and THRAP3.

The protein localises to the nucleus. It localises to the nucleoplasm. Its subcellular location is the nucleus speckle. Involved in pre-mRNA splicing. Remains associated with spliced mRNA after splicing which probably involves interactions with the exon junction complex (EJC). Can trigger mRNA decay which seems to be independent of nonsense-mediated decay involving premature stop codons (PTC) recognition. May be involved in nuclear mRNA decay. Involved in regulation of signal-induced alternative splicing. During splicing of PTPRC/CD45 is proposed to sequester phosphorylated SFPQ from PTPRC/CD45 pre-mRNA in resting T-cells. Involved in cyclin-D1/CCND1 mRNA stability probably by acting as component of the SNARP complex which associates with both the 3'end of the CCND1 gene and its mRNA. Involved in response to DNA damage. Is excluced from DNA damage sites in a manner that parallels transcription inhibition; the function may involve the SNARP complex. Initially thought to play a role in transcriptional coactivation through its association with the TRAP complex; however, it is not regarded as a stable Mediator complex subunit. Cooperatively with HELZ2, enhances the transcriptional activation mediated by PPARG, maybe through the stabilization of the PPARG binding to DNA in presence of ligand. May play a role in the terminal stage of adipocyte differentiation. Plays a role in the positive regulation of the circadian clock. Acts as a coactivator of the CLOCK-BMAL1 heterodimer and promotes its transcriptional activator activity and binding to circadian target genes. The protein is Thyroid hormone receptor-associated protein 3 (Thrap3) of Mus musculus (Mouse).